Reading from the N-terminus, the 405-residue chain is Cytoplasmic 60S subunit biogenesis factor ZNF622 (405 aa).

U1-type zinc fingers lie at residues 4-28 and 67-91; these read YTCI…TDWH and TYCT…SKKH. The tract at residues 135–230 is disordered; that stretch reads AIRAQPSSSP…GVEEEEEKQA (96 aa). Residues 194-228 show a composition bias toward acidic residues; it reads AEEEEDSEEGWEEMDSDEDLGSEEEMEGVEEEEEK.

This sequence belongs to the REI1 family. As to quaternary structure, homo- and heterodimer. Associates with pre-60S ribosomal particles. As to expression, mainly expressed in the ovary. Mainly expressed in the testis.

The protein resides in the cytoplasm. It localises to the nucleus. Its function is as follows. Pre-60S-associated cytoplasmic factor involved in the cytoplasmic maturation of the 60S subunit. This Gallus gallus (Chicken) protein is Cytoplasmic 60S subunit biogenesis factor ZNF622 (ZNF622).